The following is a 458-amino-acid chain: ATP synthase subunit beta (458 aa).

148-155 (GGAGVGKT) serves as a coordination point for ATP.

It belongs to the ATPase alpha/beta chains family. F-type ATPases have 2 components, CF(1) - the catalytic core - and CF(0) - the membrane proton channel. CF(1) has five subunits: alpha(3), beta(3), gamma(1), delta(1), epsilon(1). CF(0) has three main subunits: a(1), b(2) and c(9-12). The alpha and beta chains form an alternating ring which encloses part of the gamma chain. CF(1) is attached to CF(0) by a central stalk formed by the gamma and epsilon chains, while a peripheral stalk is formed by the delta and b chains.

Its subcellular location is the cell inner membrane. The catalysed reaction is ATP + H2O + 4 H(+)(in) = ADP + phosphate + 5 H(+)(out). Functionally, produces ATP from ADP in the presence of a proton gradient across the membrane. The catalytic sites are hosted primarily by the beta subunits. This is ATP synthase subunit beta from Pseudomonas aeruginosa (strain LESB58).